Here is a 187-residue protein sequence, read N- to C-terminus: UPF0340 protein SPG_0604 (187 aa).

It belongs to the UPF0340 family.

The sequence is that of UPF0340 protein SPG_0604 from Streptococcus pneumoniae serotype 19F (strain G54).